Here is a 143-residue protein sequence, read N- to C-terminus: Transcriptional regulator MraZ (143 aa).

2 SpoVT-AbrB domains span residues Q5–E47 and A76–V119.

This sequence belongs to the MraZ family. In terms of assembly, forms oligomers.

Its subcellular location is the cytoplasm. The protein resides in the nucleoid. In Thermoanaerobacter pseudethanolicus (strain ATCC 33223 / 39E) (Clostridium thermohydrosulfuricum), this protein is Transcriptional regulator MraZ.